The following is a 394-amino-acid chain: NAD(P)H-quinone oxidoreductase subunit H (394 aa).

The protein belongs to the complex I 49 kDa subunit family. NDH-1 can be composed of about 15 different subunits; different subcomplexes with different compositions have been identified which probably have different functions.

It localises to the cellular thylakoid membrane. The catalysed reaction is a plastoquinone + NADH + (n+1) H(+)(in) = a plastoquinol + NAD(+) + n H(+)(out). The enzyme catalyses a plastoquinone + NADPH + (n+1) H(+)(in) = a plastoquinol + NADP(+) + n H(+)(out). NDH-1 shuttles electrons from an unknown electron donor, via FMN and iron-sulfur (Fe-S) centers, to quinones in the respiratory and/or the photosynthetic chain. The immediate electron acceptor for the enzyme in this species is believed to be plastoquinone. Couples the redox reaction to proton translocation, and thus conserves the redox energy in a proton gradient. Cyanobacterial NDH-1 also plays a role in inorganic carbon-concentration. This is NAD(P)H-quinone oxidoreductase subunit H from Synechococcus sp. (strain WH7803).